The primary structure comprises 435 residues: Exopolysaccharide production protein ExoQ (435 aa).

10 helical membrane-spanning segments follow: residues 11–31 (PGAN…VFAY), 35–55 (FGQV…LVDY), 65–85 (YLWI…SAAP), 117–137 (GMIA…TYHY), 156–176 (LGFY…VLGE), 178–198 (GLWM…LLTS), 203–223 (SVLT…ITAL), 230–250 (LLFI…IYAG), 325–345 (VVET…TAFF), and 361–381 (MVLF…IDIL).

It localises to the cell membrane. Its pathway is glycan metabolism; exopolysaccharide biosynthesis. Involved in the production of exopolysaccharide. The polypeptide is Exopolysaccharide production protein ExoQ (exoQ) (Rhizobium meliloti (strain 1021) (Ensifer meliloti)).